The primary structure comprises 152 residues: Xanthine-guanine phosphoribosyltransferase (152 aa).

Residues 37–38 (RG), Arg69, and 88–96 (DDLVDTGGT) contribute to the 5-phospho-alpha-D-ribose 1-diphosphate site. Position 69 (Arg69) interacts with GMP. A Mg(2+)-binding site is contributed by Asp89. Residues Asp92 and Ile135 each coordinate guanine. Positions 92 and 135 each coordinate xanthine. GMP contacts are provided by residues 92–96 (DTGGT) and 134–135 (WI).

Belongs to the purine/pyrimidine phosphoribosyltransferase family. XGPT subfamily. In terms of assembly, homotetramer. Mg(2+) is required as a cofactor.

It localises to the cell inner membrane. The catalysed reaction is GMP + diphosphate = guanine + 5-phospho-alpha-D-ribose 1-diphosphate. The enzyme catalyses XMP + diphosphate = xanthine + 5-phospho-alpha-D-ribose 1-diphosphate. It carries out the reaction IMP + diphosphate = hypoxanthine + 5-phospho-alpha-D-ribose 1-diphosphate. Its pathway is purine metabolism; GMP biosynthesis via salvage pathway; GMP from guanine: step 1/1. The protein operates within purine metabolism; XMP biosynthesis via salvage pathway; XMP from xanthine: step 1/1. Purine salvage pathway enzyme that catalyzes the transfer of the ribosyl-5-phosphate group from 5-phospho-alpha-D-ribose 1-diphosphate (PRPP) to the N9 position of the 6-oxopurines guanine and xanthine to form the corresponding ribonucleotides GMP (guanosine 5'-monophosphate) and XMP (xanthosine 5'-monophosphate), with the release of PPi. To a lesser extent, also acts on hypoxanthine. This Photobacterium profundum (strain SS9) protein is Xanthine-guanine phosphoribosyltransferase.